Consider the following 446-residue polypeptide: ATP synthase subunit b-delta (446 aa).

Positions 1–168 are ATP synthase subunit b; the sequence is MSTFIGQLVG…PAAADVQYPL (168 aa). A helical membrane pass occupies residues 4 to 24; that stretch reads FIGQLVGFAAIVFLVVRYVVP. The interval 169–446 is ATP synthase subunit delta; sequence MTKMRSSSRV…LAAAEAQLPD (278 aa).

In the N-terminal section; belongs to the ATPase B chain family. This sequence in the C-terminal section; belongs to the ATPase delta chain family. F-type ATPases have 2 components, F(1) - the catalytic core - and F(0) - the membrane proton channel. F(1) has five subunits: alpha(3), beta(3), gamma(1), delta(1), epsilon(1). F(0) has three main subunits: a(1), b(2) and c(10-14). The alpha and beta chains form an alternating ring which encloses part of the gamma chain. F(1) is attached to F(0) by a central stalk formed by the gamma and epsilon chains, while a peripheral stalk is formed by the delta and b chains.

Its subcellular location is the cell membrane. Its function is as follows. F(1)F(0) ATP synthase produces ATP from ADP in the presence of a proton or sodium gradient. F-type ATPases consist of two structural domains, F(1) containing the extramembraneous catalytic core and F(0) containing the membrane proton channel, linked together by a central stalk and a peripheral stalk. During catalysis, ATP synthesis in the catalytic domain of F(1) is coupled via a rotary mechanism of the central stalk subunits to proton translocation. This fusion protein includes a component of the F(0) channel (subunit b) and of the F(1) subunit (subunit delta). Two copies of subunit b and one of delta together form the peripheral 'stator' stalk which links F(1) to F(0). The polypeptide is ATP synthase subunit b-delta (atpFH) (Mycobacterium avium (strain 104)).